We begin with the raw amino-acid sequence, 168 residues long: Siroheme decarboxylase NirH subunit (168 aa).

It belongs to the Ahb/Nir family. Probably forms a complex composed of NirD, NirL, NirG and NirH. All proteins are required for the total conversion of siroheme to didecarboxysiroheme.

It carries out the reaction siroheme + 2 H(+) = 12,18-didecarboxysiroheme + 2 CO2. It functions in the pathway porphyrin-containing compound metabolism. Functionally, involved in heme d1 biosynthesis. Catalyzes the decarboxylation of siroheme into didecarboxysiroheme. The chain is Siroheme decarboxylase NirH subunit from Stutzerimonas stutzeri (Pseudomonas stutzeri).